The primary structure comprises 485 residues: Noelin (485 aa).

An N-terminal signal peptide occupies residues 1–16; the sequence is MSVPLLKIGVVLSTMA. N33, N103, N187, N288, N307, N394, N431, and N473 each carry an N-linked (GlcNAc...) asparagine glycan. Positions 87–227 form a coiled coil; that stretch reads RDARTKQLRQ…LRACMQKLAC (141 aa). One can recognise an Olfactomedin-like domain in the interval 226–478; that stretch reads ACGKLTGISD…QTLYNVTLFH (253 aa). Residues C227 and C409 are joined by a disulfide bond. The Endoplasmic reticulum retention signal motif lies at 482-485; that stretch reads SDEL.

Homotetramer; disulfide-linked. Dimer of dimers, giving rise to a V-shaped homotretramer. Isoform 1 and isoform 3 interact with RTN4R. Identified in a complex with RTN4R and LINGO1. Peripherally associated with AMPAR complex. AMPAR complex consists of an inner core made of 4 pore-forming GluA/GRIA proteins (GRIA1, GRIA2, GRIA3 and GRIA4) and 4 major auxiliary subunits arranged in a twofold symmetry. One of the two pairs of distinct binding sites is occupied either by CNIH2, CNIH3 or CACNG2, CACNG3. The other harbors CACNG2, CACNG3, CACNG4, CACNG8 or GSG1L. This inner core of AMPAR complex is complemented by outer core constituents binding directly to the GluA/GRIA proteins at sites distinct from the interaction sites of the inner core constituents. Outer core constituents include at least PRRT1, PRRT2, CKAMP44/SHISA9, FRRS1L and NRN1. The proteins of the inner and outer core serve as a platform for other, more peripherally associated AMPAR constituents, including OLFM1. Alone or in combination, these auxiliary subunits control the gating and pharmacology of the AMPAR complex and profoundly impact their biogenesis and protein processing. Interacts with OLFM2. Interacts with DTNB. Expressed in the brain cortex, olfactory bulb and vomeronasal neuroepithelium (at protein level). Detected in brain cortex, hippocampus, dorsal root ganglion and olfactory bulb.

The protein resides in the secreted. Its subcellular location is the synapse. It localises to the endoplasmic reticulum. The protein localises to the cell projection. It is found in the axon. The protein resides in the perikaryon. In terms of biological role, contributes to the regulation of axonal growth in the embryonic and adult central nervous system by inhibiting interactions between RTN4R and LINGO1. Inhibits RTN4R-mediated axon growth cone collapse. May play an important role in regulating the production of neural crest cells by the neural tube. May be required for normal responses to olfactory stimuli. This chain is Noelin (Olfm1), found in Mus musculus (Mouse).